A 121-amino-acid polypeptide reads, in one-letter code: Surface glycoprotein CD59 homolog (121 aa).

The first 19 residues, 1–19, serve as a signal peptide directing secretion; the sequence is MYILFTLVLTFVFCKPIHS. One can recognise a UPAR/Ly6 domain in the interval 20-104; sequence LQCYNCSHST…ENIKRTISDK (85 aa). Cystine bridges form between cysteine 22–cysteine 45, cysteine 25–cysteine 32, cysteine 38–cysteine 58, cysteine 64–cysteine 82, and cysteine 83–cysteine 88. N-linked (GlcNAc...) asparagine; by host glycosylation is present at asparagine 24. The GPI-anchor amidated asparagine; by host moiety is linked to residue asparagine 96. Positions 97–121 are cleaved as a propeptide — removed in mature form; that stretch reads IKRTISDKALLLLALFLVTAWNFPL.

Its subcellular location is the host cell membrane. This is Surface glycoprotein CD59 homolog (15) from Saimiriine herpesvirus 2 (strain 11) (SaHV-2).